The chain runs to 407 residues: Peptidase T (407 aa).

Position 82 (His82) interacts with Zn(2+). Asp84 is a catalytic residue. Residue Asp143 participates in Zn(2+) binding. Glu177 functions as the Proton acceptor in the catalytic mechanism. Residues Glu178, Asp200, and His382 each contribute to the Zn(2+) site.

Belongs to the peptidase M20B family. The cofactor is Zn(2+).

Its subcellular location is the cytoplasm. It catalyses the reaction Release of the N-terminal residue from a tripeptide.. Functionally, cleaves the N-terminal amino acid of tripeptides. In Streptococcus pyogenes serotype M4 (strain MGAS10750), this protein is Peptidase T.